The sequence spans 957 residues: ADAMTS-like protein 2 (957 aa).

A signal peptide spans 1–29 (MDGRRQHPHWAWSLLAVAVVAGGAAPTEA). Positions 47 to 106 (AYWWGEWTKWTACSRSCGGGVTSQERHCLQQRRKSVPGTGNRTCVGTSKRYQLCRVQECP) constitute a TSP type-1 1 domain. 3 cysteine pairs are disulfide-bonded: C59-C100, C63-C105, and C74-C90. N-linked (GlcNAc...) asparagine glycosylation is found at N87, N374, N435, N482, N518, N530, N539, and N550. Polar residues predominate over residues 532-544 (SSEAPFPNTSASP). Positions 532-568 (SSEAPFPNTSASPPNLAGNRTHKARTRPKARKQGVSP) are disordered. A compositionally biased stretch (basic residues) spans 551-563 (RTHKARTRPKARK). 6 TSP type-1 domains span residues 570 to 624 (DMYR…EFCA), 628 to 692 (CQPR…PACG), 694 to 742 (QWEM…TGPP), 743 to 801 (CDRQ…KNCP), 803 to 857 (HWLA…TCFE), and 859 to 914 (PCFK…QPCP). N737 is a glycosylation site (N-linked (GlcNAc...) asparagine). The N-linked (GlcNAc...) asparagine glycan is linked to N813. One can recognise a PLAC domain in the interval 918–956 (PDDSCQDQPGTNCALAIKVNLCGHWYYSKACCRSCRPPH).

As to quaternary structure, interacts with LTBP1. In terms of processing, glycosylated. Can be O-fucosylated by POFUT2 on a serine or a threonine residue found within the consensus sequence C1-X(2)-(S/T)-C2-G of the TSP type-1 repeat domains where C1 and C2 are the first and second cysteine residue of the repeat, respectively. Fucosylated repeats can then be further glycosylated by the addition of a beta-1,3-glucose residue by the glucosyltransferase, B3GALTL. Fucosylation mediates the efficient secretion of ADAMTS family members. Can also be C-glycosylated with one or two mannose molecules on tryptophan residues within the consensus sequence W-X-X-W of the TPRs, and N-glycosylated. These other glycosylations can also facilitate secretion.

It localises to the secreted. This is ADAMTS-like protein 2 (Adamtsl2) from Mus musculus (Mouse).